Reading from the N-terminus, the 226-residue chain is Orotate phosphoribosyltransferase (226 aa).

5-phospho-alpha-D-ribose 1-diphosphate-binding positions include Lys-26, 73 to 74 (YK), Arg-100, Lys-101, Lys-104, His-106, and 128 to 136 (EDVTTSGKS). Thr-132 and Arg-161 together coordinate orotate.

This sequence belongs to the purine/pyrimidine phosphoribosyltransferase family. PyrE subfamily. Homodimer. Mg(2+) is required as a cofactor.

The enzyme catalyses orotidine 5'-phosphate + diphosphate = orotate + 5-phospho-alpha-D-ribose 1-diphosphate. The protein operates within pyrimidine metabolism; UMP biosynthesis via de novo pathway; UMP from orotate: step 1/2. Catalyzes the transfer of a ribosyl phosphate group from 5-phosphoribose 1-diphosphate to orotate, leading to the formation of orotidine monophosphate (OMP). The protein is Orotate phosphoribosyltransferase of Agathobacter rectalis (strain ATCC 33656 / DSM 3377 / JCM 17463 / KCTC 5835 / VPI 0990) (Eubacterium rectale).